A 61-amino-acid polypeptide reads, in one-letter code: MFTLKKPLLLLFFLGTINLSLCEQERNAEEERRDEPDERNAEVEKRFLPIVGKLLSGLLGK.

A signal peptide spans 1 to 22 (MFTLKKPLLLLFFLGTINLSLC). Positions 23–44 (EQERNAEEERRDEPDERNAEVE) are cleaved as a propeptide — removed in mature form. A Leucine amide modification is found at Leu-59.

It belongs to the frog skin active peptide (FSAP) family. Temporin subfamily. Expressed by the skin glands.

It is found in the secreted. Antimicrobial peptide. This is Temporin-MT3 from Amolops mantzorum (Sichuan torrent frog).